Reading from the N-terminus, the 980-residue chain is SLIT and NTRK-like protein 3 (980 aa).

The first 27 residues, 1 to 27, serve as a signal peptide directing secretion; that stretch reads MMKPSIAEMLHRGRMLWIILLSTIALG. At 30-655 the chain is on the extracellular side; the sequence is TPIPLIEDSE…SPPGGPVPLS (626 aa). A glycan (N-linked (GlcNAc...) asparagine) is linked at Asn-69. LRR repeat units lie at residues 79–100, 103–124, 127–148, 151–172, 175–196, and 198–219; these read RPFK…SFLH, NAVS…AFNG, ILKR…TFLG, SLEY…AFRN, KLRV…LFKA, and SLTH…GMLD. The LRRCT 1 domain occupies 233-284; the sequence is NPWNCTCEIVQLKSWLERIPYTALVGDITCETPFHFHGKDLREIKKTELCPL. Residues 326–361 are disordered; it reads EYKSSNKQPKPTKQPRTPRPPSTSQALYPGPNQPPI. Positions 365–407 constitute an LRRNT domain; sequence QTRPPIPIICPTGCTCNLHINDLGLTVNCKERGFNNISELLPR. LRR repeat units lie at residues 410-431, 434-455, 458-479, 482-503, 506-527, and 529-550; these read NAKK…DFWN, SLDL…AFIN, NLKS…MFRG, SLHY…AFSL, NLKL…AFAG, and SLAR…GVLE. In terms of domain architecture, LRRCT 2 spans 563–614; that stretch reads NPWDCTCDLVPFKQWIETISSVSVVGDVLCRTPENLTHRDVRTIELEVLCPE. A glycan (N-linked (GlcNAc...) asparagine) is linked at Asn-597. The tract at residues 622–644 is disordered; that stretch reads GPSPPQPGDYHPNGGPTSASPYE. The chain crosses the membrane as a helical span at residues 656 to 676; the sequence is VLILSLLVLFFSAVFVAAGLF. Over 677-980 the chain is Cytoplasmic; it reads AYVLRRRRKK…EVLEKTAYRF (304 aa). Disordered stretches follow at residues 709–735 and 762–785; these read LFED…EKAP and EEEV…GTQP. A compositionally biased stretch (gly residues) spans 715 to 725; the sequence is GNSGGSGGGGR.

The protein belongs to the SLITRK family. As to expression, broadly expressed in embryonic brain with highest expression in cortical plate, pyramidal cell layer of the hippocampus, thalamus and hypothalamus.

It is found in the membrane. Functionally, suppresses neurite outgrowth. This Mus musculus (Mouse) protein is SLIT and NTRK-like protein 3 (Slitrk3).